We begin with the raw amino-acid sequence, 669 residues long: Probable ferric reductase transmembrane component (669 aa).

Residues F17–T86 are disordered. N20, N52, N64, and N116 each carry an N-linked (GlcNAc...) asparagine glycan. The segment covering T28 to T86 has biased composition (low complexity). Residues G122–I142 traverse the membrane as a helical segment. N-linked (GlcNAc...) asparagine glycosylation occurs at N152. Transmembrane regions (helical) follow at residues I198–V218, L234–G254, V281–G301, I313–F333, and V340–L360. The Ferric oxidoreductase domain occupies T239–I373. The FAD-binding FR-type domain maps to A374 to A492. Residue H437–T442 coordinates FAD. The chain crosses the membrane as a helical span at residues V499–A519. Residues N524 and N653 are each glycosylated (N-linked (GlcNAc...) asparagine).

It belongs to the ferric reductase (FRE) family. FAD is required as a cofactor.

The protein localises to the membrane. It carries out the reaction 2 a Fe(II)-siderophore + NAD(+) + H(+) = 2 a Fe(III)-siderophore + NADH. The sequence is that of Probable ferric reductase transmembrane component (CFL1) from Candida albicans (Yeast).